The following is a 79-amino-acid chain: Acyl carrier protein (79 aa).

The region spanning 4–79 (AEIKDKVYDI…QAIDYIVNKK (76 aa)) is the Carrier domain. Ser-39 is modified (O-(pantetheine 4'-phosphoryl)serine).

The protein belongs to the acyl carrier protein (ACP) family. Post-translationally, 4'-phosphopantetheine is transferred from CoA to a specific serine of apo-ACP by AcpS. This modification is essential for activity because fatty acids are bound in thioester linkage to the sulfhydryl of the prosthetic group.

Its subcellular location is the cytoplasm. Its pathway is lipid metabolism; fatty acid biosynthesis. Its function is as follows. Carrier of the growing fatty acid chain in fatty acid biosynthesis. This is Acyl carrier protein from Chlorobaculum parvum (strain DSM 263 / NCIMB 8327) (Chlorobium vibrioforme subsp. thiosulfatophilum).